Reading from the N-terminus, the 152-residue chain is Sec-independent protein translocase protein TatB (152 aa).

The helical transmembrane segment at 1–21 (MFDVAPSELLLVAVVALVVIG) threads the bilayer. A compositionally biased stretch (basic and acidic residues) spans 60-71 (EDMEKRWAEENA). A disordered region spans residues 60–152 (EDMEKRWAEE…KEADQQEKQS (93 aa)). 2 stretches are compositionally biased toward low complexity: residues 84–98 (TASTSSPATPSPVSD) and 124–140 (AANHTETTATTAASTPA). Residues 141–152 (KPKEADQQEKQS) show a composition bias toward basic and acidic residues.

The protein belongs to the TatB family. As to quaternary structure, the Tat system comprises two distinct complexes: a TatABC complex, containing multiple copies of TatA, TatB and TatC subunits, and a separate TatA complex, containing only TatA subunits. Substrates initially bind to the TatABC complex, which probably triggers association of the separate TatA complex to form the active translocon.

It is found in the cell inner membrane. Part of the twin-arginine translocation (Tat) system that transports large folded proteins containing a characteristic twin-arginine motif in their signal peptide across membranes. Together with TatC, TatB is part of a receptor directly interacting with Tat signal peptides. TatB may form an oligomeric binding site that transiently accommodates folded Tat precursor proteins before their translocation. The protein is Sec-independent protein translocase protein TatB of Zymomonas mobilis subsp. mobilis (strain ATCC 31821 / ZM4 / CP4).